A 415-amino-acid chain; its full sequence is Histidine--tRNA ligase (415 aa).

It belongs to the class-II aminoacyl-tRNA synthetase family. In terms of assembly, homodimer.

Its subcellular location is the cytoplasm. It carries out the reaction tRNA(His) + L-histidine + ATP = L-histidyl-tRNA(His) + AMP + diphosphate + H(+). This chain is Histidine--tRNA ligase, found in Clostridium botulinum (strain ATCC 19397 / Type A).